A 160-amino-acid chain; its full sequence is Lipoprotein signal peptidase (160 aa).

The next 3 membrane-spanning stretches (helical) occupy residues 6 to 26 (VWSS…IKYL), 58 to 78 (LAWL…AFVL), and 95 to 115 (FALV…HGYV). Active-site residues include D117 and D135. A helical transmembrane segment spans residues 127-147 (SFAVFNLADAFITIGAGLIIL).

It belongs to the peptidase A8 family.

It is found in the cell inner membrane. The enzyme catalyses Release of signal peptides from bacterial membrane prolipoproteins. Hydrolyzes -Xaa-Yaa-Zaa-|-(S,diacylglyceryl)Cys-, in which Xaa is hydrophobic (preferably Leu), and Yaa (Ala or Ser) and Zaa (Gly or Ala) have small, neutral side chains.. It participates in protein modification; lipoprotein biosynthesis (signal peptide cleavage). Its function is as follows. This protein specifically catalyzes the removal of signal peptides from prolipoproteins. The polypeptide is Lipoprotein signal peptidase (Brucella abortus (strain S19)).